The following is a 388-amino-acid chain: Sphingosine N-acyltransferase-like protein FUM17 (388 aa).

Helical transmembrane passes span 60–80 and 113–133; these read SWALPLLLTIVLPVIYAIHPV and LWDLAFVAFYANALFLARKFI. N-linked (GlcNAc...) asparagine glycosylation is present at asparagine 146. Positions 151–368 constitute a TLC domain; that stretch reads GKQQRFMEQM…LLRNAYRLLF (218 aa). 4 consecutive transmembrane segments (helical) span residues 166 to 186, 204 to 224, 241 to 261, and 339 to 359; these read FAVMGPFGLYVMKTTPGLWIF, IKFYYLLQAAYWVQQSVVLVL, IITITLIALSYRFHFTHIGIS, and FITFGLLATLQTLNIIWLYCL.

It belongs to the sphingosine N-acyltransferase family.

Its subcellular location is the endoplasmic reticulum membrane. Its pathway is mycotoxin biosynthesis. Functionally, sphingosine N-acyltransferase-like protein; part of the gene cluster that mediates the biosynthesis of fumonisins B1 (FB1), B2 (FB2), B3 (FB3), and B4 (FB4), which are carcinogenic mycotoxins. May contribute to the biosynthesis of ceramide via interaction with Cer3. Does not confer resistance to FB1. The biosynthesis starts with the FUM1-catalyzed carbon chain assembly from one molecule of acetyl-CoA, eight molecules of malonyl-CoA, and two molecules of methionine (in S-adenosyl form). The C18 polyketide chain is released from the enzyme by a nucleophilic attack of a carbanion, which is derived from R-carbon of alanine by decarboxylation, on the carbonyl carbon of polyketide acyl chain. This step is catalyzed by the pyridoxal 5'-phosphate-dependent aminoacyl transferase FUM8. The resultant 3-keto intermediate is then stereospecifically reduced to a 3-hydroxyl product by reductase FUM13. Subsequent oxidations at C-10 by the cytochrome P450 monooxygenase FUM2, C-14 and C-15 by FUM6, FUM12 or FUM15, tricarballylic esterification of the hydroxyl groups on C-14 and C-15 by acyltransferase FUM14, and C-5 hydroxylation by 2-keto-glutarate-dependent dioxygenase FUM3 furnish the biosynthesis of fumonisins. The tricarballylic moieties are most likely derived from the citric acid cycle, and their addition to the carbon backbone may involve FUM7, FUM10, FUM11 and FUM14. This chain is Sphingosine N-acyltransferase-like protein FUM17, found in Gibberella moniliformis (strain M3125 / FGSC 7600) (Maize ear and stalk rot fungus).